Reading from the N-terminus, the 139-residue chain is NADPH-dependent 7-cyano-7-deazaguanine reductase (139 aa).

Residue cysteine 34 is the Thioimide intermediate of the active site. Aspartate 41 acts as the Proton donor in catalysis. Residues 56–58 (VEL) and 75–76 (HE) each bind substrate.

This sequence belongs to the GTP cyclohydrolase I family. QueF type 1 subfamily.

The protein localises to the cytoplasm. It catalyses the reaction 7-aminomethyl-7-carbaguanine + 2 NADP(+) = 7-cyano-7-deazaguanine + 2 NADPH + 3 H(+). It participates in tRNA modification; tRNA-queuosine biosynthesis. In terms of biological role, catalyzes the NADPH-dependent reduction of 7-cyano-7-deazaguanine (preQ0) to 7-aminomethyl-7-deazaguanine (preQ1). The protein is NADPH-dependent 7-cyano-7-deazaguanine reductase of Nitrosospira multiformis (strain ATCC 25196 / NCIMB 11849 / C 71).